The chain runs to 375 residues: Response regulator aspartate phosphatase E (375 aa).

Residues N24–A95 adopt a coiled-coil conformation. TPR repeat units lie at residues Y96 to I129, I177 to L210, A219 to I252, P258 to F291, M297 to P330, and E333 to I366.

It belongs to the Rap family.

The protein localises to the cytoplasm. Phosphatase activity is inhibited by the phosphatase regulator PhrE. Involved in the regulation of sporulation. Acts as a phosphatase that specifically dephosphorylates the sporulation initiation phosphotransferase Spo0F and inhibits its activity. Probably plays a dispensable role in the overall context of sporulation initiation. The chain is Response regulator aspartate phosphatase E (rapE) from Bacillus subtilis (strain 168).